Here is a 208-residue protein sequence, read N- to C-terminus: MTLKLTYFDIHGLAEPIRLLLADKQVAYEDHRVTYEQWADIKPKMIFGQVPCLLSGDEEIVQSGAIIRHLARLNGLNGSNETETTFIDMFYEGLRDLHTKYTTMIYRNYEDGKAPYIKDVLPGELARLEKLFHTYKNGEHYVIGDKESYADYVLFEELDIHLILTPNALDGVPALKKFHERFAERPNIKAYLNKRAAINPPVNGNGKQ.

The GST N-terminal domain maps to 1-78 (MTLKLTYFDI…HLARLNGLNG (78 aa)). Glutathione-binding positions include tyrosine 7, tryptophan 38, lysine 42, 49 to 50 (QV), and 62 to 63 (QS). Positions 80–202 (NETETTFIDM…NKRAAINPPV (123 aa)) constitute a GST C-terminal domain.

It belongs to the GST superfamily. Pi family. In terms of assembly, homodimer. Expressed in dopaminergic (DA) neuron (at protein levels).

The enzyme catalyses RX + glutathione = an S-substituted glutathione + a halide anion + H(+). Conjugation of reduced glutathione to a wide number of exogenous and endogenous hydrophobic electrophiles. Prevents dopaminergic CEP neuron degeneration in response to Mn(2+). This chain is Glutathione S-transferase P (gst-1), found in Caenorhabditis elegans.